Consider the following 750-residue polypeptide: uncharacterized protein (750 aa).

The next 3 helical transmembrane spans lie at 1–21 (MSIISSWLLVSIICLTTSIVT), 465–485 (YGANETGIATFIPGSSIISYL), and 586–606 (GMFGAAIYSWNFEGMSFVAVS).

The protein localises to the membrane. This is an uncharacterized protein from Saccharomyces cerevisiae (strain ATCC 204508 / S288c) (Baker's yeast).